The primary structure comprises 282 residues: 4-diphosphocytidyl-2-C-methyl-D-erythritol kinase (282 aa).

Lys-9 is a catalytic residue. 98-108 (PMGGGLGGGSS) contacts ATP. Asp-140 is a catalytic residue.

The protein belongs to the GHMP kinase family. IspE subfamily. In terms of assembly, homodimer.

The catalysed reaction is 4-CDP-2-C-methyl-D-erythritol + ATP = 4-CDP-2-C-methyl-D-erythritol 2-phosphate + ADP + H(+). It functions in the pathway isoprenoid biosynthesis; isopentenyl diphosphate biosynthesis via DXP pathway; isopentenyl diphosphate from 1-deoxy-D-xylulose 5-phosphate: step 3/6. Functionally, catalyzes the phosphorylation of the position 2 hydroxy group of 4-diphosphocytidyl-2C-methyl-D-erythritol. This Salmonella schwarzengrund (strain CVM19633) protein is 4-diphosphocytidyl-2-C-methyl-D-erythritol kinase.